Reading from the N-terminus, the 375-residue chain is Aminomethyltransferase (375 aa).

The protein belongs to the GcvT family. As to quaternary structure, the glycine cleavage system is composed of four proteins: P, T, L and H.

It carries out the reaction N(6)-[(R)-S(8)-aminomethyldihydrolipoyl]-L-lysyl-[protein] + (6S)-5,6,7,8-tetrahydrofolate = N(6)-[(R)-dihydrolipoyl]-L-lysyl-[protein] + (6R)-5,10-methylene-5,6,7,8-tetrahydrofolate + NH4(+). Its function is as follows. The glycine cleavage system catalyzes the degradation of glycine. This chain is Aminomethyltransferase, found in Symbiobacterium thermophilum (strain DSM 24528 / JCM 14929 / IAM 14863 / T).